Reading from the N-terminus, the 814-residue chain is MKKIVSLVCVLVMLVSILGSFSVVAASPVKGFQVSGTKLLDASGNELVMRGMRDISAIDLVKEIKIGWNLGNTLDAPTETAWGNPRTTKAMIEKVREMGFNAVRVPVTWDTHIGPAPDYKIDEAWLNRVEEVVNYVLDCGMYAIINVHHDNTWIIPTYANEQRSKEKLVKVWEQIATRFKDYDDHLLFETMNEPREVGSPMEWMGGTYENRDVINRFNLAVVNTIRASGGNNDKRFILVPTNAATGLDVALNDLVIPNNDSRVIVSIHAYSPYFFAMDVNGTSYWGSDYDKASLTSELDAIYNRFVKNGRAVIIGEFGTIDKNNLSSRVAHAEHYAREAVSRGIAVFWWDNGYYNPGDAETYALLNRKTLSWYYPEIVQALMRGAGVEPLVSPTPTPTLMPTPSPTVTANILYGDVNGDGKINSTDCTMLKRYILRGIEEFPSPSGIIAADVNADLKINSTDLVLMKKYLLRSIDKFPAEDSQTPDEDNPGILYNGRFDFSDPNGPKCAWSGSNVELNFYGTEASVTIKSGGENWFQAIVDGNPLPPFSVNATTSTVKLVSGLAEGAHHLVLWKRTEASLGEVQFLGFDFGSGKLLAAPKPLERKIEFIGDSITCAYGNEGTSKEQSFTPKNENSYMSYAAITARNLNASANMIAWSGIGLTMNYGGAPGPLIMDRYPYTLPYSGVRWDFSKYVPQVVVINLGTNDFSTSFADKTKFVTAYKNLISEVRRNYPDAHIFCCVGPMLWGTGLDLCRSYVTEVVNDCNRSGDLKVYFVEFPQQDGSTGYGEDWHPSIATHQLMAERLTAEIKNKLGW.

Positions 1 to 34 (MKKIVSLVCVLVMLVSILGSFSVVAASPVKGFQV) are cleaved as a signal peptide. Positions 35-354 (SGTKLLDASG…AVFWWDNGYY (320 aa)) are cellulase. The Proton donor; for cellulase activity role is filled by Glu-193. Glu-316 functions as the Nucleophile; for cellulase activity in the catalytic mechanism. The Dockerin domain occupies 409–479 (ANILYGDVNG…LLRSIDKFPA (71 aa)). Ca(2+)-binding residues include Asp-415, Asn-417, Asp-419, Gly-420, Lys-421, Asp-426, Asp-451, Val-452, Asn-453, Asp-455, Lys-457, and Asp-462. Residues 490-814 (PGILYNGRFD…TAEIKNKLGW (325 aa)) form an esterase region. Catalysis depends on Ser-612, which acts as the Nucleophile; for esterase activity.

In the N-terminal section; belongs to the glycosyl hydrolase 5 (cellulase A) family. This sequence in the C-terminal section; belongs to the carbohydrate esterase 2 (CE2) family.

It localises to the secreted. The catalysed reaction is Endohydrolysis of (1-&gt;4)-beta-D-glucosidic linkages in cellulose, lichenin and cereal beta-D-glucans.. It carries out the reaction Deacetylation of xylans and xylo-oligosaccharides.. It participates in glycan metabolism; cellulose degradation. It functions in the pathway glycan degradation; xylan degradation. With respect to regulation, esterase activity of the CE2 module is inhibited when this domain binds to cellohexaose or beta-glucan. Its function is as follows. Multifunctional enzyme involved in the degradation of plant cell wall polysaccharides. Displays endoglucanase activity against carboxymethyl cellulose (CMC) and barley beta-glucan. Also catalyzes the deacetylation of acetylated birchwood xylan and glucomannan, with a preference for the latter, and of the synthetic substrate 4-nitrophenyl acetate (4-NPAc). The sequence is that of Cellulase/esterase CelE from Acetivibrio thermocellus (strain ATCC 27405 / DSM 1237 / JCM 9322 / NBRC 103400 / NCIMB 10682 / NRRL B-4536 / VPI 7372) (Clostridium thermocellum).